A 223-amino-acid chain; its full sequence is DnaJ homolog subfamily B member 9 (223 aa).

Positions 1 to 23 (MATPQSIFIFAICILMITELILA) are cleaved as a signal peptide. The J domain maps to 26–90 (SYYDILGVPK…NRRKEYDTLG (65 aa)). Positions 91 to 223 (HSAFTNGKGQ…VTTYTDCSGQ (133 aa)) are divergent targeting domain. The residue at position 133 (Ser133) is a Phosphoserine.

Interacts with HSPA5/BiP; interaction is direct. Interacts with ERN1/IRE1 (via the luminal region). Interacts with DERL1.

It is found in the endoplasmic reticulum lumen. Its function is as follows. Co-chaperone for Hsp70 protein HSPA5/BiP that acts as a key repressor of the ERN1/IRE1-mediated unfolded protein response (UPR). J domain-containing co-chaperones stimulate the ATPase activity of Hsp70 proteins and are required for efficient substrate recognition by Hsp70 proteins. In the unstressed endoplasmic reticulum, interacts with the luminal region of ERN1/IRE1 and selectively recruits HSPA5/BiP: HSPA5/BiP disrupts the dimerization of the active ERN1/IRE1 luminal region, thereby inactivating ERN1/IRE1. Also involved in endoplasmic reticulum-associated degradation (ERAD) of misfolded proteins. Required for survival of B-cell progenitors and normal antibody production. In Pongo abelii (Sumatran orangutan), this protein is DnaJ homolog subfamily B member 9.